The sequence spans 290 residues: Fructose-1,6-bisphosphatase class 1 (290 aa).

Positions 78, 96, 98, and 99 each coordinate Mg(2+). Residues 99–102 (DGSS), Y201, and K226 each bind substrate. Residue E232 participates in Mg(2+) binding.

The protein belongs to the FBPase class 1 family. In terms of assembly, homotetramer. Mg(2+) serves as cofactor.

It localises to the cytoplasm. The catalysed reaction is beta-D-fructose 1,6-bisphosphate + H2O = beta-D-fructose 6-phosphate + phosphate. Its pathway is carbohydrate biosynthesis; gluconeogenesis. This Helicobacter pylori (strain ATCC 700392 / 26695) (Campylobacter pylori) protein is Fructose-1,6-bisphosphatase class 1.